Here is a 454-residue protein sequence, read N- to C-terminus: Maintenance of mitochondrial morphology protein 1 (454 aa).

Over 1–128 (MSMVIGIGDL…QSSGWGFAHG (128 aa)) the chain is Lumenal. Residues 129–149 (LLVGQLSVVAVLAFFIKFFIF) traverse the membrane as a helical segment. At 150–454 (GNSSMARPLM…SESETAVDSN (305 aa)) the chain is on the cytoplasmic side. The region spanning 207-430 (QSESLDWFNV…EPRFQLIELP (224 aa)) is the SMP-LTD domain.

Belongs to the MMM1 family. In terms of assembly, homodimer. Component of the ER-mitochondria encounter structure (ERMES) or MDM complex, composed of MMM1, MDM10, MDM12 and MDM34. An MMM1 homodimer associates with one molecule of MDM12 on each side in a pairwise head-to-tail manner, and the SMP-LTD domains of MMM1 and MDM12 generate a continuous hydrophobic tunnel for phospholipid trafficking.

The protein resides in the endoplasmic reticulum membrane. Component of the ERMES/MDM complex, which serves as a molecular tether to connect the endoplasmic reticulum (ER) and mitochondria. Components of this complex are involved in the control of mitochondrial shape and protein biogenesis, and function in nonvesicular lipid trafficking between the ER and mitochondria. The MDM12-MMM1 subcomplex functions in the major beta-barrel assembly pathway that is responsible for biogenesis of all outer membrane beta-barrel proteins, and acts in a late step after the SAM complex. The MDM10-MDM12-MMM1 subcomplex further acts in the TOM40-specific pathway after the action of the MDM12-MMM1 complex. Essential for establishing and maintaining the structure of mitochondria and maintenance of mtDNA nucleoids. The protein is Maintenance of mitochondrial morphology protein 1 of Komagataella phaffii (strain GS115 / ATCC 20864) (Yeast).